The sequence spans 768 residues: Glucoamylase S2 (768 aa).

Positions Met-1–Gly-21 are cleaved as a signal peptide. 2 disordered regions span residues Arg-29–Ile-83 and Thr-125–Pro-149. Over residues Gly-30–Ser-48 the composition is skewed to low complexity. Asn-35 carries N-linked (GlcNAc...) asparagine glycosylation. The segment covering Ala-49–Tyr-66 has biased composition (polar residues). 2 stretches are compositionally biased toward low complexity: residues Thr-71–Ile-83 and Ser-131–Pro-149. 5 N-linked (GlcNAc...) asparagine glycosylation sites follow: Asn-309, Asn-323, Asn-415, Asn-424, and Asn-435. Residues Val-349 to Tyr-692 are h subunit. Trp-456 is a substrate binding site. A glycan (N-linked (GlcNAc...) asparagine) is linked at Asn-514. Asp-519 serves as the catalytic Proton acceptor. Glu-522 functions as the Proton donor in the catalytic mechanism. Asn-547, Asn-646, Asn-651, Asn-721, and Asn-742 each carry an N-linked (GlcNAc...) asparagine glycan. The segment at Arg-693–Asn-768 is y subunit.

Belongs to the glycosyl hydrolase 15 family.

The catalysed reaction is Hydrolysis of terminal (1-&gt;4)-linked alpha-D-glucose residues successively from non-reducing ends of the chains with release of beta-D-glucose.. The protein is Glucoamylase S2 (STA2) of Saccharomyces cerevisiae (Baker's yeast).